Here is a 113-residue protein sequence, read N- to C-terminus: uncharacterized protein (113 aa).

Belongs to the HesB/IscA family.

This is an uncharacterized protein from Synechocystis sp. (strain ATCC 27184 / PCC 6803 / Kazusa).